The sequence spans 78 residues: Small ribosomal subunit protein bS18 (78 aa).

Belongs to the bacterial ribosomal protein bS18 family. In terms of assembly, part of the 30S ribosomal subunit. Forms a tight heterodimer with protein bS6.

Binds as a heterodimer with protein bS6 to the central domain of the 16S rRNA, where it helps stabilize the platform of the 30S subunit. This Nocardioides sp. (strain ATCC BAA-499 / JS614) protein is Small ribosomal subunit protein bS18.